The sequence spans 305 residues: Phosphoribosylaminoimidazole-succinocarboxamide synthase (305 aa).

It belongs to the SAICAR synthetase family.

It carries out the reaction 5-amino-1-(5-phospho-D-ribosyl)imidazole-4-carboxylate + L-aspartate + ATP = (2S)-2-[5-amino-1-(5-phospho-beta-D-ribosyl)imidazole-4-carboxamido]succinate + ADP + phosphate + 2 H(+). Its pathway is purine metabolism; IMP biosynthesis via de novo pathway; 5-amino-1-(5-phospho-D-ribosyl)imidazole-4-carboxamide from 5-amino-1-(5-phospho-D-ribosyl)imidazole-4-carboxylate: step 1/2. The polypeptide is Phosphoribosylaminoimidazole-succinocarboxamide synthase (Polaromonas naphthalenivorans (strain CJ2)).